Consider the following 480-residue polypeptide: Glycogen synthase (480 aa).

Lys15 is a binding site for ADP-alpha-D-glucose.

The protein belongs to the glycosyltransferase 1 family. Bacterial/plant glycogen synthase subfamily.

It carries out the reaction [(1-&gt;4)-alpha-D-glucosyl](n) + ADP-alpha-D-glucose = [(1-&gt;4)-alpha-D-glucosyl](n+1) + ADP + H(+). It functions in the pathway glycan biosynthesis; glycogen biosynthesis. Synthesizes alpha-1,4-glucan chains using ADP-glucose. The chain is Glycogen synthase from Opitutus terrae (strain DSM 11246 / JCM 15787 / PB90-1).